The sequence spans 154 residues: Large ribosomal subunit protein bL17 (154 aa).

Residues 127–154 (TAAKQDRAKRVKGSKKAETEKEGGESAE) are disordered. Residues 141–154 (KKAETEKEGGESAE) are compositionally biased toward basic and acidic residues.

It belongs to the bacterial ribosomal protein bL17 family. In terms of assembly, part of the 50S ribosomal subunit. Contacts protein L32.

The chain is Large ribosomal subunit protein bL17 from Chlorobaculum parvum (strain DSM 263 / NCIMB 8327) (Chlorobium vibrioforme subsp. thiosulfatophilum).